An 85-amino-acid polypeptide reads, in one-letter code: SPbeta prophage-derived uncharacterized protein YoqG (85 aa).

The protein is SPbeta prophage-derived uncharacterized protein YoqG (yoqG) of Bacillus subtilis (strain 168).